The following is a 451-amino-acid chain: Bifunctional protein GlmU (451 aa).

Residues 1–232 (MTARSSLTIV…EDEVRGINTK (232 aa)) form a pyrophosphorylase region. Residues 11–14 (LAAG), K25, Q78, and 83–84 (GT) contribute to the UDP-N-acetyl-alpha-D-glucosamine site. D108 is a binding site for Mg(2+). UDP-N-acetyl-alpha-D-glucosamine is bound by residues G144, E158, N173, and N230. A Mg(2+)-binding site is contributed by N230. Residues 233–253 (AQLAEAESVMQARLRKAAMEA) are linker. Residues 254 to 451 (GVTLIAPETV…MKTRGKKPEK (198 aa)) are N-acetyltransferase. The UDP-N-acetyl-alpha-D-glucosamine site is built by R319 and K337. The active-site Proton acceptor is the H349. Residues Y352 and N363 each contribute to the UDP-N-acetyl-alpha-D-glucosamine site. Residues A366, 372–373 (NY), S409, and R426 contribute to the acetyl-CoA site.

The protein in the N-terminal section; belongs to the N-acetylglucosamine-1-phosphate uridyltransferase family. This sequence in the C-terminal section; belongs to the transferase hexapeptide repeat family. Homotrimer. It depends on Mg(2+) as a cofactor.

The protein localises to the cytoplasm. The enzyme catalyses alpha-D-glucosamine 1-phosphate + acetyl-CoA = N-acetyl-alpha-D-glucosamine 1-phosphate + CoA + H(+). It catalyses the reaction N-acetyl-alpha-D-glucosamine 1-phosphate + UTP + H(+) = UDP-N-acetyl-alpha-D-glucosamine + diphosphate. The protein operates within nucleotide-sugar biosynthesis; UDP-N-acetyl-alpha-D-glucosamine biosynthesis; N-acetyl-alpha-D-glucosamine 1-phosphate from alpha-D-glucosamine 6-phosphate (route II): step 2/2. It participates in nucleotide-sugar biosynthesis; UDP-N-acetyl-alpha-D-glucosamine biosynthesis; UDP-N-acetyl-alpha-D-glucosamine from N-acetyl-alpha-D-glucosamine 1-phosphate: step 1/1. Its pathway is bacterial outer membrane biogenesis; LPS lipid A biosynthesis. Catalyzes the last two sequential reactions in the de novo biosynthetic pathway for UDP-N-acetylglucosamine (UDP-GlcNAc). The C-terminal domain catalyzes the transfer of acetyl group from acetyl coenzyme A to glucosamine-1-phosphate (GlcN-1-P) to produce N-acetylglucosamine-1-phosphate (GlcNAc-1-P), which is converted into UDP-GlcNAc by the transfer of uridine 5-monophosphate (from uridine 5-triphosphate), a reaction catalyzed by the N-terminal domain. This chain is Bifunctional protein GlmU, found in Bradyrhizobium diazoefficiens (strain JCM 10833 / BCRC 13528 / IAM 13628 / NBRC 14792 / USDA 110).